Consider the following 244-residue polypeptide: tRNA pseudouridine synthase B (244 aa).

Asp-46 acts as the Nucleophile in catalysis.

This sequence belongs to the pseudouridine synthase TruB family. Type 1 subfamily.

It catalyses the reaction uridine(55) in tRNA = pseudouridine(55) in tRNA. Functionally, responsible for synthesis of pseudouridine from uracil-55 in the psi GC loop of transfer RNAs. This is tRNA pseudouridine synthase B from Bordetella parapertussis (strain 12822 / ATCC BAA-587 / NCTC 13253).